We begin with the raw amino-acid sequence, 148 residues long: MLNYFVYPYGIENDIGIKFYMILVPIISIVLIIINYIITNKSDNNINKTGPYECGFDSFRQSRTTYSIKFILIAILFLPFDLELTSILPYTLSIYNLNIYGLFILLYFLLPLIIGFIIEINLKAIYITKIFNRNVKSITSYVKYNNKI.

Helical transmembrane passes span 19 to 39 (FYMI…YIIT), 70 to 90 (FILI…ILPY), and 99 to 119 (IYGL…FIIE).

This sequence belongs to the complex I subunit 3 family.

It is found in the mitochondrion membrane. The catalysed reaction is a ubiquinone + NADH + 5 H(+)(in) = a ubiquinol + NAD(+) + 4 H(+)(out). Functionally, core subunit of the mitochondrial membrane respiratory chain NADH dehydrogenase (Complex I) that is believed to belong to the minimal assembly required for catalysis. Complex I functions in the transfer of electrons from NADH to the respiratory chain. The immediate electron acceptor for the enzyme is believed to be ubiquinone. In Wickerhamomyces canadensis (Yeast), this protein is NADH-ubiquinone oxidoreductase chain 3 (ND3).